Reading from the N-terminus, the 553-residue chain is Dihydroxy-acid dehydratase (553 aa).

Aspartate 78 lines the Mg(2+) pocket. Cysteine 119 is a binding site for [2Fe-2S] cluster. The Mg(2+) site is built by aspartate 120 and lysine 121. Lysine 121 carries the post-translational modification N6-carboxylysine. Cysteine 193 is a [2Fe-2S] cluster binding site. Glutamate 441 lines the Mg(2+) pocket. The Proton acceptor role is filled by serine 467.

This sequence belongs to the IlvD/Edd family. In terms of assembly, homodimer. Requires [2Fe-2S] cluster as cofactor. Mg(2+) is required as a cofactor.

The catalysed reaction is (2R)-2,3-dihydroxy-3-methylbutanoate = 3-methyl-2-oxobutanoate + H2O. It catalyses the reaction (2R,3R)-2,3-dihydroxy-3-methylpentanoate = (S)-3-methyl-2-oxopentanoate + H2O. It participates in amino-acid biosynthesis; L-isoleucine biosynthesis; L-isoleucine from 2-oxobutanoate: step 3/4. The protein operates within amino-acid biosynthesis; L-valine biosynthesis; L-valine from pyruvate: step 3/4. Functionally, functions in the biosynthesis of branched-chain amino acids. Catalyzes the dehydration of (2R,3R)-2,3-dihydroxy-3-methylpentanoate (2,3-dihydroxy-3-methylvalerate) into 2-oxo-3-methylpentanoate (2-oxo-3-methylvalerate) and of (2R)-2,3-dihydroxy-3-methylbutanoate (2,3-dihydroxyisovalerate) into 2-oxo-3-methylbutanoate (2-oxoisovalerate), the penultimate precursor to L-isoleucine and L-valine, respectively. This Geobacter sp. (strain M21) protein is Dihydroxy-acid dehydratase.